We begin with the raw amino-acid sequence, 1067 residues long: Carbamoyl phosphate synthase large chain (1067 aa).

Positions 1 to 401 (MPLNKDIKKV…AFLKGIRSLE (401 aa)) are carboxyphosphate synthetic domain. 12 residues coordinate ATP: R129, R169, G175, G176, K208, V210, E215, G241, I242, H243, Q284, and E298. The ATP-grasp 1 domain occupies 133-327 (RDMMNRINQP…IAKVAAKIAL (195 aa)). The Mg(2+) site is built by Q284, E298, and N300. Mn(2+) is bound by residues Q284, E298, and N300. Residues 402–549 (IGKYSLEHKK…YSTYEQYDEV (148 aa)) form an oligomerization domain region. Residues 550–932 (VVSDNKKVVV…ALYKGFVGAS (383 aa)) form a carbamoyl phosphate synthetic domain region. An ATP-grasp 2 domain is found at 674-864 (DDLLERLNIA…IVDIATRIML (191 aa)). 10 residues coordinate ATP: R710, K749, L751, E755, G780, V781, H782, S783, Q823, and E835. The Mg(2+) site is built by Q823, E835, and N837. The Mn(2+) site is built by Q823, E835, and N837. Residues 933–1067 (MYTGDKGKTI…NRELEVFNLI (135 aa)) enclose the MGS-like domain. Positions 933-1067 (MYTGDKGKTI…NRELEVFNLI (135 aa)) are allosteric domain.

This sequence belongs to the CarB family. As to quaternary structure, composed of two chains; the small (or glutamine) chain promotes the hydrolysis of glutamine to ammonia, which is used by the large (or ammonia) chain to synthesize carbamoyl phosphate. Tetramer of heterodimers (alpha,beta)4. The cofactor is Mg(2+). Requires Mn(2+) as cofactor.

It carries out the reaction hydrogencarbonate + L-glutamine + 2 ATP + H2O = carbamoyl phosphate + L-glutamate + 2 ADP + phosphate + 2 H(+). The enzyme catalyses hydrogencarbonate + NH4(+) + 2 ATP = carbamoyl phosphate + 2 ADP + phosphate + 2 H(+). It functions in the pathway amino-acid biosynthesis; L-arginine biosynthesis; carbamoyl phosphate from bicarbonate: step 1/1. Its pathway is pyrimidine metabolism; UMP biosynthesis via de novo pathway; (S)-dihydroorotate from bicarbonate: step 1/3. Functionally, large subunit of the glutamine-dependent carbamoyl phosphate synthetase (CPSase). CPSase catalyzes the formation of carbamoyl phosphate from the ammonia moiety of glutamine, carbonate, and phosphate donated by ATP, constituting the first step of 2 biosynthetic pathways, one leading to arginine and/or urea and the other to pyrimidine nucleotides. The large subunit (synthetase) binds the substrates ammonia (free or transferred from glutamine from the small subunit), hydrogencarbonate and ATP and carries out an ATP-coupled ligase reaction, activating hydrogencarbonate by forming carboxy phosphate which reacts with ammonia to form carbamoyl phosphate. The chain is Carbamoyl phosphate synthase large chain from Clostridium perfringens (strain 13 / Type A).